Consider the following 355-residue polypeptide: Fructose-bisphosphate aldolase, cytoplasmic isozyme (355 aa).

Residues R52 and K142 each coordinate substrate. E183 serves as the catalytic Proton acceptor. K225 (schiff-base intermediate with dihydroxyacetone-P) is an active-site residue.

The protein belongs to the class I fructose-bisphosphate aldolase family.

The protein resides in the cytoplasm. The enzyme catalyses beta-D-fructose 1,6-bisphosphate = D-glyceraldehyde 3-phosphate + dihydroxyacetone phosphate. The protein operates within carbohydrate degradation; glycolysis; D-glyceraldehyde 3-phosphate and glycerone phosphate from D-glucose: step 4/4. This chain is Fructose-bisphosphate aldolase, cytoplasmic isozyme, found in Zea mays (Maize).